The primary structure comprises 453 residues: Tubulin alpha-13 chain (453 aa).

Q11 provides a ligand contact to GTP. K40 carries the post-translational modification N6-acetyllysine. GTP is bound by residues E71, S140, G144, T145, T179, N206, and N228. E71 contacts Mg(2+). E254 is a catalytic residue. The disordered stretch occupies residues 429–453; sequence EKDYEEVGTESQEGDGEEGEDGGDQ. Acidic residues predominate over residues 431 to 453; it reads DYEEVGTESQEGDGEEGEDGGDQ.

The protein belongs to the tubulin family. Dimer of alpha and beta chains. A typical microtubule is a hollow water-filled tube with an outer diameter of 25 nm and an inner diameter of 15 nM. Alpha-beta heterodimers associate head-to-tail to form protofilaments running lengthwise along the microtubule wall with the beta-tubulin subunit facing the microtubule plus end conferring a structural polarity. Microtubules usually have 13 protofilaments but different protofilament numbers can be found in some organisms and specialized cells. It depends on Mg(2+) as a cofactor. Acetylation of alpha chains at Lys-40 stabilizes microtubules and affects affinity and processivity of microtubule motors. This modification has a role in multiple cellular functions, ranging from cell motility, cell cycle progression or cell differentiation to intracellular trafficking and signaling.

Its subcellular location is the cytoplasm. The protein resides in the cytoskeleton. The enzyme catalyses GTP + H2O = GDP + phosphate + H(+). Functionally, tubulin is the major constituent of microtubules, a cylinder consisting of laterally associated linear protofilaments composed of alpha- and beta-tubulin heterodimers. Microtubules grow by the addition of GTP-tubulin dimers to the microtubule end, where a stabilizing cap forms. Below the cap, tubulin dimers are in GDP-bound state, owing to GTPase activity of alpha-tubulin. In Naegleria pringsheimi (Amoeba), this protein is Tubulin alpha-13 chain (TUBA13).